A 144-amino-acid polypeptide reads, in one-letter code: Putative pre-16S rRNA nuclease (144 aa).

The protein belongs to the YqgF nuclease family.

The protein localises to the cytoplasm. Could be a nuclease involved in processing of the 5'-end of pre-16S rRNA. This is Putative pre-16S rRNA nuclease from Lactiplantibacillus plantarum (strain ATCC BAA-793 / NCIMB 8826 / WCFS1) (Lactobacillus plantarum).